A 171-amino-acid chain; its full sequence is NADH-quinone oxidoreductase subunit B (171 aa).

Positions 39, 40, 105, and 134 each coordinate [4Fe-4S] cluster.

The protein belongs to the complex I 20 kDa subunit family. As to quaternary structure, NDH-1 is composed of 14 different subunits. Subunits NuoB, C, D, E, F, and G constitute the peripheral sector of the complex. [4Fe-4S] cluster is required as a cofactor.

Its subcellular location is the cell inner membrane. It catalyses the reaction a quinone + NADH + 5 H(+)(in) = a quinol + NAD(+) + 4 H(+)(out). NDH-1 shuttles electrons from NADH, via FMN and iron-sulfur (Fe-S) centers, to quinones in the respiratory chain. The immediate electron acceptor for the enzyme in this species is believed to be ubiquinone. Couples the redox reaction to proton translocation (for every two electrons transferred, four hydrogen ions are translocated across the cytoplasmic membrane), and thus conserves the redox energy in a proton gradient. In Aliarcobacter butzleri (strain RM4018) (Arcobacter butzleri), this protein is NADH-quinone oxidoreductase subunit B.